Reading from the N-terminus, the 230-residue chain is uncharacterized protein (230 aa).

A helical transmembrane segment spans residues 93-115 (VFLYYFLIVYTSGNVDLISRFLF).

It belongs to the DUP/COS family.

Its subcellular location is the membrane. This is an uncharacterized protein from Saccharomyces cerevisiae (strain ATCC 204508 / S288c) (Baker's yeast).